Consider the following 227-residue polypeptide: MSRPIIVFDLDGTLIDTAPDLLDSLNHSLAASELTAVDEAGFRRFVGHGGRVMIERAHAAQQRSLDVAEHDRLLKLFLDHYTDNIPGKSRPYPGVIEAIARFEKAGYLLAICTNKYEANSLALIEALGLTRHFAAIAGQDTFAFRKPDPRHLTETIRLAGGDAHRALMVGDSQTDIDTAKAAGIPVVAVDFGYTDRHVREFEPSAVISHFDALTVELAERLIRAAGH.

The active-site Nucleophile is the Asp-9. 3 residues coordinate Mg(2+): Asp-9, Asp-11, and Asp-171.

The protein belongs to the HAD-like hydrolase superfamily. CbbY/CbbZ/Gph/YieH family. Requires Mg(2+) as cofactor.

It catalyses the reaction 2-phosphoglycolate + H2O = glycolate + phosphate. It participates in organic acid metabolism; glycolate biosynthesis; glycolate from 2-phosphoglycolate: step 1/1. Specifically catalyzes the dephosphorylation of 2-phosphoglycolate. Is involved in the dissimilation of the intracellular 2-phosphoglycolate formed during the DNA repair of 3'-phosphoglycolate ends, a major class of DNA lesions induced by oxidative stress. This Mesorhizobium japonicum (strain LMG 29417 / CECT 9101 / MAFF 303099) (Mesorhizobium loti (strain MAFF 303099)) protein is Phosphoglycolate phosphatase.